Reading from the N-terminus, the 21-residue chain is Bibrotoxin (21 aa).

2 disulfides stabilise this stretch: Cys1/Cys15 and Cys3/Cys11.

It belongs to the endothelin/sarafotoxin family. In terms of tissue distribution, expressed by the venom gland.

Its subcellular location is the secreted. Its function is as follows. Vasoconstrictor activity. These toxins cause cardiac arrest probably as a result of coronary vasospasm. May act by displaying agonistic activities towards endothelin-1 and -2 receptors (EDNRA and EDNRB). This chain is Bibrotoxin, found in Atractaspis bibronii (Bibron's mole viper).